The chain runs to 1090 residues: Telomerase reverse transcriptase (1090 aa).

Residues 184-301 (GFLLRPPSRK…PLEGGPSWRS (118 aa)) are disordered. Basic residues predominate over residues 190–204 (PSRKHKSFQVGKKTR). Composition is skewed to basic and acidic residues over residues 218–232 (EESRKRRRVESEVST) and 252–262 (HHEERRQHEAV). Pro residues predominate over residues 281 to 294 (KPPPETSAAPPPLE). Positions 316–321 (TLGFLY) match the TFLY; involved in RNA binding motif. Interaction with RNA template stretches follow at residues 371-376 (LPLRYF) and 477-503 (WKIKVMDCDWLKLRRTAGRFPPSELAY). In terms of domain architecture, Reverse transcriptase spans 569-893 (SPAQVASLPK…CLFPWCGLLL (325 aa)). Mg(2+) is bound by residues D666, D826, and D827.

It belongs to the reverse transcriptase family. Telomerase subfamily. As to quaternary structure, catalytic subunit of the telomerase holoenzyme complex composed minimally of TERT and the telomerase RNA template component (TERC). In terms of tissue distribution, expressed at highest levels in gonads and brain, and at lower levels in heart, spleen, kidney, gill, muscle and skin. Detected in embryonic stem cell lines before and after differentiation. Isoform F is expressed in gonads, with higher levels in testis relative to ovary, but is not detected in other tissues. Isoform B is expressed predominantly in testis. Isoform C is up-regulated in embryonic stem cell lines after differentiation.

It localises to the nucleus. It is found in the chromosome. The protein resides in the telomere. It catalyses the reaction DNA(n) + a 2'-deoxyribonucleoside 5'-triphosphate = DNA(n+1) + diphosphate. Its function is as follows. Telomerase is a ribonucleoprotein enzyme essential for the replication of chromosome termini in most eukaryotes. It elongates telomeres. It is a reverse transcriptase that adds simple sequence repeats to chromosome ends by copying a template sequence within the RNA component of the enzyme. The sequence is that of Telomerase reverse transcriptase from Oryzias latipes (Japanese rice fish).